Reading from the N-terminus, the 314-residue chain is Olfactory receptor 5G9 (314 aa).

Topologically, residues 1-25 (MADENYTRITEFIFIGLRYHPNLQV) are extracellular. The N-linked (GlcNAc...) asparagine glycan is linked to Asn5. A helical transmembrane segment spans residues 26 to 46 (FLFLLFLLFYLVTMTGNLGMI). Residues 47-54 (ILIRVDSR) lie on the Cytoplasmic side of the membrane. Residues 55 to 75 (LHTPMYFFLSHLSFVDICFSS) form a helical membrane-spanning segment. Residues 76–99 (VVAPKMLTDFFADKKAISFLGCVL) are Extracellular-facing. A disulfide bridge links Cys97 with Cys189. Residues 100-120 (QQWFFGFFVAIECLLLASMAY) traverse the membrane as a helical segment. Residues 121–133 (DRYVAICNPLLYS) are Cytoplasmic-facing. Residues 134 to 154 (VAMSQRLCIQLVIGPYAVGFF) form a helical membrane-spanning segment. The Extracellular segment spans residues 155-196 (NTMTHTTAAFRLPFCGSNIINHFFCDMSPILSLICADIRINK). The chain crosses the membrane as a helical span at residues 197–217 (LLVFIVAGAVLIVSSTTIIVS). Residues 218-237 (YFHILIAILRIRSAEGRRKA) lie on the Cytoplasmic side of the membrane. Residues 238–258 (FSTCSSHVTAVSILYGTLFFI) traverse the membrane as a helical segment. Topologically, residues 259–271 (YVRPSAISSLDLN) are extracellular. The helical transmembrane segment at 272 to 292 (KVVSVFYTAVIPMLNPLIYSL) threads the bilayer. At 293–314 (RNKEVKSAMGRTVAKAKVFLKN) the chain is on the cytoplasmic side.

Belongs to the G-protein coupled receptor 1 family.

It localises to the cell membrane. Potential odorant receptor. The protein is Olfactory receptor 5G9 of Mus musculus (Mouse).